The following is a 429-amino-acid chain: Nucleotide exchange factor Sil1 (429 aa).

An N-terminal signal peptide occupies residues 1–24 (MSGKQVVILLGSVLILGCLQVAAA). N-linked (GlcNAc...) asparagine glycosylation occurs at Asn-29. Residues 70–98 (DESERGTSLQSQPDDQNARESHDDNEPLA) are disordered. Over residues 75 to 84 (GTSLQSQPDD) the composition is skewed to polar residues. Residues 85-94 (QNARESHDDN) are compositionally biased toward basic and acidic residues. The stretch at 104 to 135 (DIIEESIRRVKEQKKSYAELRKAYKEFQKNFR) forms a coiled coil. N-linked (GlcNAc...) asparagine glycans are attached at residues Asn-150, Asn-199, and Asn-400. Positions 426–429 (HTEL) match the Prevents secretion from ER motif.

Belongs to the SIL1 family.

It is found in the endoplasmic reticulum lumen. Required for protein translocation and folding in the endoplasmic reticulum (ER). Functions as a nucleotide exchange factor for an ER lumenal chaperone of HSP70 family. This chain is Nucleotide exchange factor Sil1, found in Drosophila melanogaster (Fruit fly).